The chain runs to 523 residues: Tyrosine-protein kinase transforming protein Src (523 aa).

The disordered stretch occupies residues 1–50; sequence MGSSKSKPKDPSQRRRSLEPPDSTHHGGFPASQTPNKTAAPDTHRTPSRS. G2 carries N-myristoyl glycine; by host lipidation. The segment covering 7 to 25 has biased composition (basic and acidic residues); it reads KPKDPSQRRRSLEPPDSTH. In terms of domain architecture, SH3 spans 71–139; it reads TSPQRAGALA…PSNYVAPSDS (69 aa). The region spanning 145–242 is the SH2 domain; sequence WYFGKITRRE…GLCHRLTNVC (98 aa). In terms of domain architecture, Protein kinase spans 264-514; sequence LRLEVKLGQG…TFEYLQAQLL (251 aa). Residues 270 to 278 and K292 each bind ATP; that span reads LGQGYFGEV. The Proton acceptor role is filled by D383. Y413 is modified (phosphotyrosine; by autocatalysis).

It belongs to the protein kinase superfamily. Tyr protein kinase family. SRC subfamily. In terms of assembly, homodimer. In terms of processing, the phosphorylated form is termed pp60v-src.

It catalyses the reaction L-tyrosyl-[protein] + ATP = O-phospho-L-tyrosyl-[protein] + ADP + H(+). This phosphoprotein, required for both the initiation and the maintenance of neoplastic transformation, is a protein kinase that catalyzes the phosphorylation of tyrosine residues in vitro. The protein is Tyrosine-protein kinase transforming protein Src (V-SRC) of Gallus gallus (Chicken).